Reading from the N-terminus, the 257-residue chain is Non-homologous end joining protein Ku (257 aa).

Positions 9–184 (TFGMVAIPIG…YTKPEVNEQE (176 aa)) constitute a Ku domain.

The protein belongs to the prokaryotic Ku family. As to quaternary structure, homodimer. Interacts with LigD.

Its function is as follows. With LigD forms a non-homologous end joining (NHEJ) DNA repair enzyme, which repairs dsDNA breaks with reduced fidelity. Binds linear dsDNA with 5'- and 3'- overhangs but not closed circular dsDNA nor ssDNA. Recruits and stimulates the ligase activity of LigD. The sequence is that of Non-homologous end joining protein Ku from Lachnoclostridium phytofermentans (strain ATCC 700394 / DSM 18823 / ISDg) (Clostridium phytofermentans).